We begin with the raw amino-acid sequence, 250 residues long: 5-oxoprolinase subunit A (250 aa).

The protein belongs to the LamB/PxpA family. As to quaternary structure, forms a complex composed of PxpA, PxpB and PxpC.

It catalyses the reaction 5-oxo-L-proline + ATP + 2 H2O = L-glutamate + ADP + phosphate + H(+). Catalyzes the cleavage of 5-oxoproline to form L-glutamate coupled to the hydrolysis of ATP to ADP and inorganic phosphate. The protein is 5-oxoprolinase subunit A of Staphylococcus aureus (strain bovine RF122 / ET3-1).